The chain runs to 130 residues: Small ribosomal subunit protein uS8 (130 aa).

The protein belongs to the universal ribosomal protein uS8 family. As to quaternary structure, part of the 30S ribosomal subunit.

One of the primary rRNA binding proteins, it binds directly to 16S rRNA central domain where it helps coordinate assembly of the platform of the 30S subunit. This chain is Small ribosomal subunit protein uS8, found in Methanosphaerula palustris (strain ATCC BAA-1556 / DSM 19958 / E1-9c).